The primary structure comprises 138 residues: MNQLLREVLTPDAERTQNFTVGDTVKVHYKIVESGKERVQIYEGVVISVANEANGKTFTVRRVSYDVGVERIFPLFSPRIAKIELIRKGKVRRAKLYYLRNLAGKAARIKELKGGKALVSEDRKRQQAAAATKSTTTE.

It belongs to the bacterial ribosomal protein bL19 family.

In terms of biological role, this protein is located at the 30S-50S ribosomal subunit interface and may play a role in the structure and function of the aminoacyl-tRNA binding site. The protein is Large ribosomal subunit protein bL19 of Leptospira interrogans serogroup Icterohaemorrhagiae serovar Lai (strain 56601).